Consider the following 669-residue polypeptide: DNA ligase (669 aa).

Residues Asp-33–Asp-37, Ser-82–Leu-83, and Glu-115 contribute to the NAD(+) site. Lys-117 functions as the N6-AMP-lysine intermediate in the catalytic mechanism. The NAD(+) site is built by Arg-138, Glu-172, Lys-286, and Lys-310. Zn(2+) is bound by residues Cys-401, Cys-404, Cys-417, and Cys-422. One can recognise a BRCT domain in the interval Ile-589–Asp-669.

This sequence belongs to the NAD-dependent DNA ligase family. LigA subfamily. It depends on Mg(2+) as a cofactor. Mn(2+) serves as cofactor.

It carries out the reaction NAD(+) + (deoxyribonucleotide)n-3'-hydroxyl + 5'-phospho-(deoxyribonucleotide)m = (deoxyribonucleotide)n+m + AMP + beta-nicotinamide D-nucleotide.. Functionally, DNA ligase that catalyzes the formation of phosphodiester linkages between 5'-phosphoryl and 3'-hydroxyl groups in double-stranded DNA using NAD as a coenzyme and as the energy source for the reaction. It is essential for DNA replication and repair of damaged DNA. This Borrelia recurrentis (strain A1) protein is DNA ligase.